The following is a 257-amino-acid chain: 3-deoxy-manno-octulosonate cytidylyltransferase (257 aa).

This sequence belongs to the KdsB family.

Its subcellular location is the cytoplasm. The catalysed reaction is 3-deoxy-alpha-D-manno-oct-2-ulosonate + CTP = CMP-3-deoxy-beta-D-manno-octulosonate + diphosphate. The protein operates within nucleotide-sugar biosynthesis; CMP-3-deoxy-D-manno-octulosonate biosynthesis; CMP-3-deoxy-D-manno-octulosonate from 3-deoxy-D-manno-octulosonate and CTP: step 1/1. It functions in the pathway bacterial outer membrane biogenesis; lipopolysaccharide biosynthesis. Functionally, activates KDO (a required 8-carbon sugar) for incorporation into bacterial lipopolysaccharide in Gram-negative bacteria. This is 3-deoxy-manno-octulosonate cytidylyltransferase from Rhodospirillum centenum (strain ATCC 51521 / SW).